We begin with the raw amino-acid sequence, 477 residues long: Calcium/calmodulin-dependent protein kinase type 1G (477 aa).

Residues Phe-23–Ile-277 form the Protein kinase domain. Residues Leu-29–Val-37 and Lys-52 contribute to the ATP site. Asp-143 functions as the Proton acceptor in the catalytic mechanism. The autoinhibitory domain stretch occupies residues Ile-277 to Met-317. A calmodulin-binding region spans residues Lys-297–Arg-318. Residues Ser-326–Arg-388 form a disordered region. The span at Ser-376–Arg-388 shows a compositional bias: low complexity.

This sequence belongs to the protein kinase superfamily. CAMK Ser/Thr protein kinase family. CaMK subfamily. May be prenylated on Cys-474. As to expression, highly expressed in brain, in neuronal cell bodies of the central nucleus of amygdala and ventromedial hypothalamic nucleus. Also detected in heart, testis, and kidney.

The protein resides in the cytoplasm. It localises to the golgi apparatus membrane. The protein localises to the cell membrane. The catalysed reaction is L-seryl-[protein] + ATP = O-phospho-L-seryl-[protein] + ADP + H(+). The enzyme catalyses L-threonyl-[protein] + ATP = O-phospho-L-threonyl-[protein] + ADP + H(+). Its activity is regulated as follows. Activated by Ca(2+)/calmodulin. Binding of calmodulin is thought to result in a conformational change and leads to activation through phosphorylation by CAMKK1. Functionally, calcium/calmodulin-dependent protein kinase belonging to a proposed calcium-triggered signaling cascade. In vitro phosphorylates transcription factor CREB1. This chain is Calcium/calmodulin-dependent protein kinase type 1G (Camk1g), found in Mus musculus (Mouse).